The sequence spans 179 residues: Peptidyl-prolyl cis-trans isomerase H (179 aa).

The 163-residue stretch at 16 to 178 (FFDISIGDTP…LQVRIAECGE (163 aa)) folds into the PPIase cyclophilin-type domain.

The protein belongs to the cyclophilin-type PPIase family. PPIase H subfamily.

It is found in the nucleus. It carries out the reaction [protein]-peptidylproline (omega=180) = [protein]-peptidylproline (omega=0). In terms of biological role, PPIases accelerate the folding of proteins. It catalyzes the cis-trans isomerization of proline imidic peptide bonds in oligopeptides. The polypeptide is Peptidyl-prolyl cis-trans isomerase H (CYP3) (Cryptococcus neoformans var. neoformans serotype D (strain B-3501A) (Filobasidiella neoformans)).